The following is a 215-amino-acid chain: Protein-L-isoaspartate O-methyltransferase (215 aa).

Ser62 is an active-site residue.

It belongs to the methyltransferase superfamily. L-isoaspartyl/D-aspartyl protein methyltransferase family.

It localises to the cytoplasm. The enzyme catalyses [protein]-L-isoaspartate + S-adenosyl-L-methionine = [protein]-L-isoaspartate alpha-methyl ester + S-adenosyl-L-homocysteine. Functionally, catalyzes the methyl esterification of L-isoaspartyl residues in peptides and proteins that result from spontaneous decomposition of normal L-aspartyl and L-asparaginyl residues. It plays a role in the repair and/or degradation of damaged proteins. The sequence is that of Protein-L-isoaspartate O-methyltransferase from Bradyrhizobium sp. (strain BTAi1 / ATCC BAA-1182).